The chain runs to 241 residues: Tryptophan synthase alpha chain (241 aa).

Active-site proton acceptor residues include E31 and D42.

It belongs to the TrpA family. In terms of assembly, tetramer of two alpha and two beta chains.

The catalysed reaction is (1S,2R)-1-C-(indol-3-yl)glycerol 3-phosphate + L-serine = D-glyceraldehyde 3-phosphate + L-tryptophan + H2O. It functions in the pathway amino-acid biosynthesis; L-tryptophan biosynthesis; L-tryptophan from chorismate: step 5/5. Its function is as follows. The alpha subunit is responsible for the aldol cleavage of indoleglycerol phosphate to indole and glyceraldehyde 3-phosphate. The polypeptide is Tryptophan synthase alpha chain (Staphylococcus saprophyticus subsp. saprophyticus (strain ATCC 15305 / DSM 20229 / NCIMB 8711 / NCTC 7292 / S-41)).